Here is a 71-residue protein sequence, read N- to C-terminus: UPF0346 protein SMU_1621c (71 aa).

It belongs to the UPF0346 family.

The polypeptide is UPF0346 protein SMU_1621c (Streptococcus mutans serotype c (strain ATCC 700610 / UA159)).